The chain runs to 69 residues: uncharacterized protein (69 aa).

Residues 13 to 35 traverse the membrane as a helical segment; that stretch reads IRSINPTLLNFINYFLLIVPQFI.

The protein resides in the membrane. This is an uncharacterized protein from Saccharomyces cerevisiae (strain ATCC 204508 / S288c) (Baker's yeast).